A 393-amino-acid chain; its full sequence is Homeobox protein knotted-1-like 4 (393 aa).

The segment covering 1 to 13 (MAFHNNHFNHFTD) has biased composition (polar residues). Disordered stretches follow at residues 1–39 (MAFHNNHFNHFTDQQQHQPPPPPQQQQQQHFQESAPPNW) and 81–114 (QRGNTANNNNNETSGDVIEDVPGGEESMIGEKKE). Residues 286 to 306 (ELKHELKQGYKEKIVDIREEI) enclose the ELK domain. A DNA-binding region (homeobox; TALE-type) is located at residues 307–370 (LRKRRAGKLP…NQRKRNWHSN (64 aa)). Positions 363–393 (RKRNWHSNPSSSTVSKNKRRSNAGENSGRDR) are disordered. The segment covering 368–377 (HSNPSSSTVS) has biased composition (polar residues).

Belongs to the TALE/KNOX homeobox family. In terms of assembly, may form heterodimeric complex with the TALE/BELL proteins. Interacts with OFP1, OFP2, OFP4 and OFP12. Interacts with KNATM-B.

It is found in the nucleus. The protein is Homeobox protein knotted-1-like 4 (KNAT4) of Arabidopsis thaliana (Mouse-ear cress).